A 62-amino-acid chain; its full sequence is Photosystem II reaction center protein Z (62 aa).

Helical transmembrane passes span 8 to 28 and 41 to 61; these read ALLA…VVFA and FSGL…NSFV.

Belongs to the PsbZ family. As to quaternary structure, PSII is composed of 1 copy each of membrane proteins PsbA, PsbB, PsbC, PsbD, PsbE, PsbF, PsbH, PsbI, PsbJ, PsbK, PsbL, PsbM, PsbT, PsbY, PsbZ, Psb30/Ycf12, at least 3 peripheral proteins of the oxygen-evolving complex and a large number of cofactors. It forms dimeric complexes.

It is found in the plastid. The protein resides in the chloroplast thylakoid membrane. In terms of biological role, controls the interaction of photosystem II (PSII) cores with the light-harvesting antenna, aiding in the dissipation of excitation energy within PSII. PSII is a light-driven water plastoquinone oxidoreductase, using light energy to abstract electrons from H(2)O, generating a proton gradient subsequently used for ATP formation. The chain is Photosystem II reaction center protein Z from Chlamydomonas reinhardtii (Chlamydomonas smithii).